The primary structure comprises 592 residues: Ferric-chelate reductase 1 (592 aa).

The helical transmembrane segment at 2–22 threads the bilayer; it reads AAPQITLSVLVIALLTCSVTA. The Reelin domain maps to 13-179; that stretch reads IALLTCSVTA…FTTPKATTQP (167 aa). Residues Asn-85, Asn-308, Asn-321, and Asn-353 are each glycosylated (N-linked (GlcNAc...) asparagine). Residues 216 to 331 enclose the DOMON domain; it reads EPACVFLSFT…ESYYIFFAEG (116 aa). In terms of domain architecture, Cytochrome b561 spans 335–534; the sequence is DGRIFRHSQQ…IGTEVILEIH (200 aa). Residues 372-392 traverse the membrane as a helical segment; that stretch reads AHGALMFVAWMTTVSIGVLVA. Residues His-373 and His-414 each contribute to the heme b site. 5 consecutive transmembrane segments (helical) span residues 415–435, 446–466, 477–499, 515–535, and 569–589; these read RMLM…PFVY, HPYL…LATF, VFNW…AMFL, YAMM…EIHA, and VVLA…LSAI. Heme b contacts are provided by His-446 and His-482.

Belongs to the FRRS1 family. The cofactor is heme b. In terms of tissue distribution, expressed in spleen, liver and kidney with low expression in brain. Localizes in adult brain to the choroid plexus of the fourth, third, and lateral ventricles and to ependymal cells that line the ventricles.

It is found in the membrane. Ferric-chelate reductases reduce Fe(3+) to Fe(2+) before its transport from the endosome to the cytoplasm. This is Ferric-chelate reductase 1 (FRRS1) from Mus musculus (Mouse).